Reading from the N-terminus, the 352-residue chain is [LysW]-L-2-aminoadipate/[LysW]-L-glutamate phosphate reductase (352 aa).

Residue 13–16 (SGYT) coordinates NADP(+). Cys-153 is an active-site residue. Asn-319 contributes to the NADP(+) binding site.

The protein belongs to the NAGSA dehydrogenase family. Type 1 subfamily. LysY sub-subfamily.

The protein resides in the cytoplasm. It catalyses the reaction [amino-group carrier protein]-C-terminal-N-(1-carboxy-5-oxopentan-1-yl)-L-glutamine + phosphate + NADP(+) = [amino-group carrier protein]-C-terminal-N-(1-carboxy-5-phosphooxy-5-oxopentan-1-yl)-L-glutamine + NADPH + H(+). The enzyme catalyses [amino-group carrier protein]-C-terminal-gamma-(L-glutamyl-5-semialdehyde)-L-glutamate + phosphate + NADP(+) = [amino-group carrier protein]-C-terminal-gamma-(5-phospho-L-glutamyl)-L-glutamate + NADPH + H(+). Its pathway is amino-acid biosynthesis; L-lysine biosynthesis via AAA pathway; L-lysine from L-alpha-aminoadipate (Thermus route): step 3/5. It participates in amino-acid biosynthesis; L-arginine biosynthesis. Involved in both the arginine and lysine biosynthetic pathways. This Saccharolobus solfataricus (strain ATCC 35092 / DSM 1617 / JCM 11322 / P2) (Sulfolobus solfataricus) protein is [LysW]-L-2-aminoadipate/[LysW]-L-glutamate phosphate reductase.